We begin with the raw amino-acid sequence, 412 residues long: Transcription factor IIIA (412 aa).

A C2H2-type 1; degenerate zinc finger spans residues 20-43 (YLCQYCGISRSKNYLITKHIQSHH). 3 C2H2-type zinc fingers span residues 66-88 (HTCQECGAEFKKPAHLKQHMQSH), 94-118 (FTCYVDDCAASYRRKDHLNRHLLTH), and 123-148 (FKCPKENCKSEFSVQGNVGRHVKKYH). The tract at residues 144 to 207 (VKKYHSNDNR…NGNGDSQPAE (64 aa)) is disordered. Over residues 148–188 (HSNDNRDKDNTGLGDGDKDNTCKGDDDKEKSGSGGCEKENE) the composition is skewed to basic and acidic residues. Lys185 is covalently cross-linked (Glycyl lysine isopeptide (Lys-Gly) (interchain with G-Cter in ubiquitin)). The segment at 215–239 (VVCKEIGCGKAFKYPSQLQKHQDSH) adopts a C2H2-type 5 zinc-finger fold. The segment at 247–272 (AFCSEPGCMKYFTNEECLKSHIRSCH) adopts a C2H2-type 6; degenerate zinc-finger fold. Residues 275 to 296 (INCEICGSKHLKKNIKRHLRTH) form a C2H2-type 7; degenerate zinc finger. The segment at 305 to 330 (IKCEVEGCSSTFSKASNLQKHMKAVH) adopts a C2H2-type 8 zinc-finger fold. The segment at 336-362 (FVCGFPGCGMRFAYKHVRNKHENSGYH) adopts a C2H2-type 9; degenerate zinc-finger fold. Positions 384 to 391 (LKRKQVTA) match the Nuclear localization signal motif.

Post-translationally, protein product TFIIIA (44 kDa) is proteolytically cleaved into TFIIIA-C (34 kDa). As to expression, expressed in seedlings, flowers, siliques and seeds.

The protein resides in the nucleus. Its subcellular location is the nucleolus. Functionally, essential protein. Isoform 1 is a transcription activator the binds both 5S rDNA and 5S rRNA and stimulates the transcription of 5S rRNA gene. Isoform 1 regulates 5S rRNA levels during development. This Arabidopsis thaliana (Mouse-ear cress) protein is Transcription factor IIIA.